A 374-amino-acid chain; its full sequence is Chaperone protein DnaJ (374 aa).

A J domain is found at 5-69 (NYYQILGVSK…QKRAAYDRLG (65 aa)). Residues 137 to 215 (GIEKNISFSS…CHGMGRYHKQ (79 aa)) form a CR-type zinc finger. Residues C150, C153, C167, C170, C189, C192, C203, and C206 each coordinate Zn(2+). CXXCXGXG motif repeat units lie at residues 150–157 (CDTCHGSG), 167–174 (CDACSGVG), 189–196 (CHKCQGNG), and 203–210 (CKKCHGMG).

This sequence belongs to the DnaJ family. As to quaternary structure, homodimer. It depends on Zn(2+) as a cofactor.

Its subcellular location is the cytoplasm. Functionally, participates actively in the response to hyperosmotic and heat shock by preventing the aggregation of stress-denatured proteins and by disaggregating proteins, also in an autonomous, DnaK-independent fashion. Unfolded proteins bind initially to DnaJ; upon interaction with the DnaJ-bound protein, DnaK hydrolyzes its bound ATP, resulting in the formation of a stable complex. GrpE releases ADP from DnaK; ATP binding to DnaK triggers the release of the substrate protein, thus completing the reaction cycle. Several rounds of ATP-dependent interactions between DnaJ, DnaK and GrpE are required for fully efficient folding. Also involved, together with DnaK and GrpE, in the DNA replication of plasmids through activation of initiation proteins. This is Chaperone protein DnaJ from Rickettsia massiliae (strain Mtu5).